Consider the following 58-residue polypeptide: Small ribosomal subunit protein bS21 (58 aa).

Belongs to the bacterial ribosomal protein bS21 family.

The sequence is that of Small ribosomal subunit protein bS21 from Prochlorococcus marinus (strain MIT 9301).